The following is a 735-amino-acid chain: Catalase-peroxidase (735 aa).

Polar residues-rich tracts occupy residues 1–10 (MENQNRQNAA) and 17–26 (SVTNQSSNRT). The tract at residues 1–30 (MENQNRQNAAQCPFHGSVTNQSSNRTTNKD) is disordered. A cross-link (tryptophyl-tyrosyl-methioninium (Trp-Tyr) (with M-249)) is located at residues 100–223 (WHSAGTYRIG…LAAVQMGLIY (124 aa)). Residue His101 is the Proton acceptor of the active site. Positions 223 to 249 (YVNPEGPDGKPDPKAAARDIRETFRRM) form a cross-link, tryptophyl-tyrosyl-methioninium (Tyr-Met) (with W-100). His264 contributes to the heme b binding site.

It belongs to the peroxidase family. Peroxidase/catalase subfamily. Homodimer or homotetramer. It depends on heme b as a cofactor. In terms of processing, formation of the three residue Trp-Tyr-Met cross-link is important for the catalase, but not the peroxidase activity of the enzyme.

It carries out the reaction H2O2 + AH2 = A + 2 H2O. It catalyses the reaction 2 H2O2 = O2 + 2 H2O. In terms of biological role, bifunctional enzyme with both catalase and broad-spectrum peroxidase activity. Also displays NADH oxidase, INH lyase and isonicotinoyl-NAD synthase activities. This Geobacillus stearothermophilus (Bacillus stearothermophilus) protein is Catalase-peroxidase.